The following is a 229-amino-acid chain: Prolactin (229 aa).

A signal peptide spans 1 to 30 (MDSKGSAQKGSRLLLLLVVSNLLLCQGVVS). An intrachain disulfide couples Cys34 to Cys41. Ser56, Ser64, and Ser120 each carry phosphoserine. Cystine bridges form between Cys88/Cys204 and Cys221/Cys229.

Belongs to the somatotropin/prolactin family. As to quaternary structure, interacts with PRLR.

The protein localises to the secreted. Its function is as follows. Prolactin acts primarily on the mammary gland by promoting lactation. The polypeptide is Prolactin (PRL) (Capra hircus (Goat)).